A 360-amino-acid polypeptide reads, in one-letter code: NAD(P)H-quinone oxidoreductase subunit 1, chloroplastic (360 aa).

Helical transmembrane passes span 30–50 (FLPIFSLVVGIVTGVLVLVWL), 98–118 (FSIGPSLAVISILLSYSVIPF), 127–147 (FNIGIFLWIAISSIAPIGLLM), 165–185 (AAQSISYEIPLTLCLLSISLL), 203–223 (FWGWNLWRQPIGFIIFLISSL), 253–273 (FGLFYVASYLNLLISSLFVTV), 297–317 (IFGTTIGIFITLAKTYLFLFI), and 340–360 (FLLPISLGNLLLTTSFQVFSL).

This sequence belongs to the complex I subunit 1 family. NDH is composed of at least 16 different subunits, 5 of which are encoded in the nucleus.

The protein localises to the plastid. It localises to the chloroplast thylakoid membrane. The catalysed reaction is a plastoquinone + NADH + (n+1) H(+)(in) = a plastoquinol + NAD(+) + n H(+)(out). It carries out the reaction a plastoquinone + NADPH + (n+1) H(+)(in) = a plastoquinol + NADP(+) + n H(+)(out). Functionally, NDH shuttles electrons from NAD(P)H:plastoquinone, via FMN and iron-sulfur (Fe-S) centers, to quinones in the photosynthetic chain and possibly in a chloroplast respiratory chain. The immediate electron acceptor for the enzyme in this species is believed to be plastoquinone. Couples the redox reaction to proton translocation, and thus conserves the redox energy in a proton gradient. This is NAD(P)H-quinone oxidoreductase subunit 1, chloroplastic from Aethionema cordifolium (Lebanon stonecress).